The primary structure comprises 466 residues: Uronate isomerase (466 aa).

This sequence belongs to the metallo-dependent hydrolases superfamily. Uronate isomerase family.

It catalyses the reaction D-glucuronate = D-fructuronate. The enzyme catalyses aldehydo-D-galacturonate = keto-D-tagaturonate. It functions in the pathway carbohydrate metabolism; pentose and glucuronate interconversion. This chain is Uronate isomerase, found in Lachnoclostridium phytofermentans (strain ATCC 700394 / DSM 18823 / ISDg) (Clostridium phytofermentans).